The primary structure comprises 405 residues: Riboflavin biosynthesis protein RibBA (405 aa).

The segment at 1–205 is DHBP synthase; sequence MEEIKLNTIE…IKDLIAYRLK (205 aa). D-ribulose 5-phosphate-binding positions include 30–31, Asp35, 144–148, and Glu168; these read RE and RAGHT. Glu31 is a binding site for Mg(2+). A Mg(2+)-binding site is contributed by His147. The segment at 206–405 is GTP cyclohydrolase II; the sequence is QESIVEKGVE…RMGHELHNIK (200 aa). Residue 256–260 coordinates GTP; the sequence is RMHSS. Cys261, Cys272, and Cys274 together coordinate Zn(2+). Residues Gln277, 299 to 301, and Thr321 each bind GTP; that span reads EGR. Catalysis depends on Asp333, which acts as the Proton acceptor; for GTP cyclohydrolase activity. The Nucleophile; for GTP cyclohydrolase activity role is filled by Arg335. GTP is bound by residues Thr356 and Lys361.

It in the N-terminal section; belongs to the DHBP synthase family. In the C-terminal section; belongs to the GTP cyclohydrolase II family. Mg(2+) serves as cofactor. Mn(2+) is required as a cofactor. The cofactor is Zn(2+).

It catalyses the reaction D-ribulose 5-phosphate = (2S)-2-hydroxy-3-oxobutyl phosphate + formate + H(+). It carries out the reaction GTP + 4 H2O = 2,5-diamino-6-hydroxy-4-(5-phosphoribosylamino)-pyrimidine + formate + 2 phosphate + 3 H(+). It participates in cofactor biosynthesis; riboflavin biosynthesis; 2-hydroxy-3-oxobutyl phosphate from D-ribulose 5-phosphate: step 1/1. The protein operates within cofactor biosynthesis; riboflavin biosynthesis; 5-amino-6-(D-ribitylamino)uracil from GTP: step 1/4. Catalyzes the conversion of D-ribulose 5-phosphate to formate and 3,4-dihydroxy-2-butanone 4-phosphate. Its function is as follows. Catalyzes the conversion of GTP to 2,5-diamino-6-ribosylamino-4(3H)-pyrimidinone 5'-phosphate (DARP), formate and pyrophosphate. The sequence is that of Riboflavin biosynthesis protein RibBA from Porphyromonas gingivalis (strain ATCC 33277 / DSM 20709 / CIP 103683 / JCM 12257 / NCTC 11834 / 2561).